We begin with the raw amino-acid sequence, 98 residues long: NADH-ubiquinone oxidoreductase chain 4L (98 aa).

The next 3 membrane-spanning stretches (helical) occupy residues 1–21 (MSPI…GMLV), 26–46 (LMAS…MIAL), and 61–81 (IILL…LVSI).

Belongs to the complex I subunit 4L family. Core subunit of respiratory chain NADH dehydrogenase (Complex I) which is composed of 45 different subunits.

It is found in the mitochondrion inner membrane. It carries out the reaction a ubiquinone + NADH + 5 H(+)(in) = a ubiquinol + NAD(+) + 4 H(+)(out). In terms of biological role, core subunit of the mitochondrial membrane respiratory chain NADH dehydrogenase (Complex I) which catalyzes electron transfer from NADH through the respiratory chain, using ubiquinone as an electron acceptor. Part of the enzyme membrane arm which is embedded in the lipid bilayer and involved in proton translocation. This is NADH-ubiquinone oxidoreductase chain 4L (MT-ND4L) from Chlorocebus sabaeus (Green monkey).